A 231-amino-acid polypeptide reads, in one-letter code: MENGAAPTAPAVIVAIDGPSGTGKSSTSKAVAAQLGLSYLDTGAQYRAITWWMVTNGIDTDDPHAVAAAAGKPEIVSGTDPAGPTITVDGVDVAGPIRTQEVTSKVSAVSAVPEVRARITELQRTIAAAAPLGIVVEGRDIGTTVLPDADLKIFLTASAEARAARRSGELKGADVHATREALIKRDAADSSRKTSPLAKAGDAVEVDTTALSLPQVIECVVTLVEEKRAGK.

ATP is bound at residue 18–26 (GPSGTGKSS).

It belongs to the cytidylate kinase family. Type 1 subfamily.

The protein localises to the cytoplasm. The catalysed reaction is CMP + ATP = CDP + ADP. The enzyme catalyses dCMP + ATP = dCDP + ADP. The chain is Cytidylate kinase from Streptomyces coelicolor (strain ATCC BAA-471 / A3(2) / M145).